We begin with the raw amino-acid sequence, 355 residues long: Isopentenyl-diphosphate delta-isomerase (355 aa).

A substrate-binding site is contributed by 6 to 7; that stretch reads RK. FMN-binding positions include 62–64, serine 93, and asparagine 122; that span reads AMT. Glutamine 152 lines the substrate pocket. Glutamate 153 is a Mg(2+) binding site. Residues lysine 184, threonine 214, 258–259, and 280–281 each bind FMN; these read GG and AG.

It belongs to the IPP isomerase type 2 family. In terms of assembly, homooctamer. Dimer of tetramers. It depends on FMN as a cofactor. The cofactor is NADPH. Mg(2+) is required as a cofactor.

It is found in the cytoplasm. It carries out the reaction isopentenyl diphosphate = dimethylallyl diphosphate. Functionally, involved in the biosynthesis of isoprenoids. Catalyzes the 1,3-allylic rearrangement of the homoallylic substrate isopentenyl (IPP) to its allylic isomer, dimethylallyl diphosphate (DMAPP). In Bacillus pumilus (strain SAFR-032), this protein is Isopentenyl-diphosphate delta-isomerase.